A 303-amino-acid polypeptide reads, in one-letter code: Putative AraC-like transcription regulator (303 aa).

In terms of domain architecture, HTH araC/xylS-type spans 202–300 (ASALTFLHRD…GMNPGDYRKH (99 aa)). 2 DNA-binding regions (H-T-H motif) span residues 219-240 (AELA…KATV) and 267-290 (LAAI…KRVL).

The sequence is that of Putative AraC-like transcription regulator from Streptomyces antibioticus.